Consider the following 1396-residue polypeptide: DNA-directed RNA polymerase subunit beta' (1396 aa).

Residues cysteine 70, cysteine 72, cysteine 85, and cysteine 88 each coordinate Zn(2+). Mg(2+) is bound by residues aspartate 460, aspartate 462, and aspartate 464. Residues cysteine 814, cysteine 888, cysteine 895, and cysteine 898 each coordinate Zn(2+).

It belongs to the RNA polymerase beta' chain family. In terms of assembly, the RNAP catalytic core consists of 2 alpha, 1 beta, 1 beta' and 1 omega subunit. When a sigma factor is associated with the core the holoenzyme is formed, which can initiate transcription. Mg(2+) is required as a cofactor. The cofactor is Zn(2+).

It catalyses the reaction RNA(n) + a ribonucleoside 5'-triphosphate = RNA(n+1) + diphosphate. Its function is as follows. DNA-dependent RNA polymerase catalyzes the transcription of DNA into RNA using the four ribonucleoside triphosphates as substrates. This Chromobacterium violaceum (strain ATCC 12472 / DSM 30191 / JCM 1249 / CCUG 213 / NBRC 12614 / NCIMB 9131 / NCTC 9757 / MK) protein is DNA-directed RNA polymerase subunit beta'.